A 550-amino-acid chain; its full sequence is Chaperonin GroEL (550 aa).

Residues Thr30–Pro33, Lys51, Asp87–Thr91, Gly415, and Asp495 each bind ATP.

This sequence belongs to the chaperonin (HSP60) family. Forms a cylinder of 14 subunits composed of two heptameric rings stacked back-to-back. Interacts with the co-chaperonin GroES.

It is found in the cytoplasm. It catalyses the reaction ATP + H2O + a folded polypeptide = ADP + phosphate + an unfolded polypeptide.. Functionally, together with its co-chaperonin GroES, plays an essential role in assisting protein folding. The GroEL-GroES system forms a nano-cage that allows encapsulation of the non-native substrate proteins and provides a physical environment optimized to promote and accelerate protein folding. The sequence is that of Chaperonin GroEL from Dechloromonas aromatica (strain RCB).